We begin with the raw amino-acid sequence, 396 residues long: Immunoglobulin heavy constant gamma 4 (396 aa).

The interval 1–98 (ASTKGPSVFP…PSNTKVDKRV (98 aa)) is CH1. Residues 1-347 (ASTKGPSVFP…DGELDGLWTT (347 aa)) are Extracellular-facing. Ig-like domains follow at residues 6-99 (PSVF…KRVE), 118-217 (PSVF…KTIS), and 226-322 (PQVY…KSLS). Cys-27 and Cys-83 are oxidised to a cystine. The interval 99 to 110 (ESKYGPPCPSCP) is hinge. The segment at 111–220 (APEFLGGPSV…SIEKTISKAK (110 aa)) is CH2. Intrachain disulfides connect Cys-141–Cys-201 and Cys-247–Cys-305. Residue Asn-177 is glycosylated (N-linked (GlcNAc...) (complex) asparagine). A CH3 region spans residues 221–327 (GQPREPQVYT…QKSLSLSLEL (107 aa)). The chain crosses the membrane as a helical span at residues 348–368 (ITIFITLFLLSVCYSATVTFF). The Cytoplasmic portion of the chain corresponds to 369–396 (KVKWIFSSVVDLKQTIVPDYRNMIRQGA).

In terms of assembly, immunoglobulins are composed of two identical heavy chains and two identical light chains; disulfide-linked. Glycosylation on Asn-177 is required for interaction with Fc receptors and ability to activate the complement pathway. In terms of processing, (Microbial infection) Deglycosylation on Asn-177 by S.pyogenes EndoS or Endos2 endoglucosidases prevents interaction between immunoglobulin-gamma (IgG) and Fc receptors, impairing ability to activate the complement pathway.

It is found in the secreted. It localises to the cell membrane. Its function is as follows. Constant region of immunoglobulin heavy chains. Immunoglobulins, also known as antibodies, are membrane-bound or secreted glycoproteins produced by B lymphocytes. In the recognition phase of humoral immunity, the membrane-bound immunoglobulins serve as receptors which, upon binding of a specific antigen, trigger the clonal expansion and differentiation of B lymphocytes into immunoglobulins-secreting plasma cells. Secreted immunoglobulins mediate the effector phase of humoral immunity, which results in the elimination of bound antigens. The antigen binding site is formed by the variable domain of one heavy chain, together with that of its associated light chain. Thus, each immunoglobulin has two antigen binding sites with remarkable affinity for a particular antigen. The variable domains are assembled by a process called V-(D)-J rearrangement and can then be subjected to somatic hypermutations which, after exposure to antigen and selection, allow affinity maturation for a particular antigen. In Homo sapiens (Human), this protein is Immunoglobulin heavy constant gamma 4.